A 321-amino-acid polypeptide reads, in one-letter code: Acetyl-coenzyme A carboxylase carboxyl transferase subunit alpha (321 aa).

The CoA carboxyltransferase C-terminal domain occupies D32–E293.

The protein belongs to the AccA family. In terms of assembly, acetyl-CoA carboxylase is a heterohexamer composed of biotin carboxyl carrier protein (AccB), biotin carboxylase (AccC) and two subunits each of ACCase subunit alpha (AccA) and ACCase subunit beta (AccD).

The protein localises to the cytoplasm. It carries out the reaction N(6)-carboxybiotinyl-L-lysyl-[protein] + acetyl-CoA = N(6)-biotinyl-L-lysyl-[protein] + malonyl-CoA. The protein operates within lipid metabolism; malonyl-CoA biosynthesis; malonyl-CoA from acetyl-CoA: step 1/1. In terms of biological role, component of the acetyl coenzyme A carboxylase (ACC) complex. First, biotin carboxylase catalyzes the carboxylation of biotin on its carrier protein (BCCP) and then the CO(2) group is transferred by the carboxyltransferase to acetyl-CoA to form malonyl-CoA. This chain is Acetyl-coenzyme A carboxylase carboxyl transferase subunit alpha, found in Chromobacterium violaceum (strain ATCC 12472 / DSM 30191 / JCM 1249 / CCUG 213 / NBRC 12614 / NCIMB 9131 / NCTC 9757 / MK).